The following is a 516-amino-acid chain: Adenine DNA glycosylase (516 aa).

The segment covering 1-23 (MKKLRASVRSHKKQPANHKRRGK) has biased composition (basic residues). Residues 1–38 (MKKLRASVRSHKKQPANHKRRGKCALSSSQAKPSGLDG) form a disordered region. E105 (proton donor/acceptor) is an active-site residue. Residues C261, C268, C271, and C277 each coordinate [4Fe-4S] cluster. The Nudix hydrolase domain maps to 335–467 (PREEYSATCV…AMKKVFRVYE (133 aa)). The short motif at 376-398 (VTLEPSGQHQHKALLQELQHWSA) is the Nudix box element. Positions 474-516 (CKGSKRPQVCTPSSRKKPSRGQQVLDRFFQRHIPTHKPNSTTQ) are disordered.

This sequence belongs to the Nth/MutY family. [4Fe-4S] cluster serves as cofactor. Expressed in brain, spleen, heart, liver and kidney.

It is found in the nucleus. The protein localises to the mitochondrion. The enzyme catalyses Hydrolyzes free adenine bases from 7,8-dihydro-8-oxoguanine:adenine mismatched double-stranded DNA, leaving an apurinic site.. Its function is as follows. Involved in oxidative DNA damage repair. Initiates repair of A*oxoG to C*G by removing the inappropriately paired adenine base from the DNA backbone. Possesses both adenine and 2-OH-A DNA glycosylase activities. In Rattus norvegicus (Rat), this protein is Adenine DNA glycosylase (Mutyh).